Here is a 226-residue protein sequence, read N- to C-terminus: V-type proton ATPase subunit E (226 aa).

It belongs to the V-ATPase E subunit family. V-ATPase is a heteromultimeric enzyme made up of two complexes: the ATP-hydrolytic V1 complex and the proton translocation V0 complex. The V1 complex consists of three catalytic AB heterodimers that form a heterohexamer, three peripheral stalks each consisting of EG heterodimers, one central rotor including subunits D and F, and the regulatory subunits C and H. The proton translocation complex V0 consists of the proton transport subunit a, a ring of proteolipid subunits c9c'', rotary subunit d, subunits e and f, and the accessory subunits vah-19/Ac45 and vah-20/PRR. As to expression, expressed in the excretory cell and syncytial hypodermal cells (at protein level). Expressed in the intestine (at protein level).

It localises to the cytoplasm. Its subcellular location is the apical cell membrane. Functionally, subunit of the V1 complex of vacuolar(H+)-ATPase (V-ATPase), a multisubunit enzyme composed of a peripheral complex (V1) that hydrolyzes ATP and a membrane integral complex (V0) that translocates protons. V-ATPase is responsible for acidifying and maintaining the pH of intracellular compartments and in some cell types, is targeted to the plasma membrane, where it is responsible for acidifying the extracellular environment. Regulates pH homeostasis in the intestine. Probably by regulating cytoplasmic pH, required for cell survival in the intestine and hypodermis. Involved in receptor-mediated endocytosis. Involved in embryogenesis and larval development. This Caenorhabditis elegans protein is V-type proton ATPase subunit E.